Here is a 245-residue protein sequence, read N- to C-terminus: Ribonuclease 3 (245 aa).

In terms of domain architecture, RNase III spans 19–148 (FKVFQEKIGI…FIGALYLDQG (130 aa)). Glutamate 61 contributes to the Mg(2+) binding site. The active site involves aspartate 65. Mg(2+)-binding residues include aspartate 134 and glutamate 137. Glutamate 137 is a catalytic residue. The 70-residue stretch at 174-243 (DYKSQLQELI…AAEALKKLKE (70 aa)) folds into the DRBM domain.

This sequence belongs to the ribonuclease III family. Homodimer. The cofactor is Mg(2+).

The protein localises to the cytoplasm. The enzyme catalyses Endonucleolytic cleavage to 5'-phosphomonoester.. In terms of biological role, digests double-stranded RNA. Involved in the processing of primary rRNA transcript to yield the immediate precursors to the large and small rRNAs (23S and 16S). Processes some mRNAs, and tRNAs when they are encoded in the rRNA operon. Processes pre-crRNA and tracrRNA of type II CRISPR loci if present in the organism. In Bacillus cereus (strain ATCC 14579 / DSM 31 / CCUG 7414 / JCM 2152 / NBRC 15305 / NCIMB 9373 / NCTC 2599 / NRRL B-3711), this protein is Ribonuclease 3.